Here is a 121-residue protein sequence, read N- to C-terminus: Small ribosomal subunit protein uS13 (121 aa).

Positions 90-121 (RHRHGLPVRGQHTKNNARTRKGKAVAIAGKKK) are disordered.

Belongs to the universal ribosomal protein uS13 family. In terms of assembly, part of the 30S ribosomal subunit. Forms a loose heterodimer with protein S19. Forms two bridges to the 50S subunit in the 70S ribosome.

Functionally, located at the top of the head of the 30S subunit, it contacts several helices of the 16S rRNA. In the 70S ribosome it contacts the 23S rRNA (bridge B1a) and protein L5 of the 50S subunit (bridge B1b), connecting the 2 subunits; these bridges are implicated in subunit movement. Contacts the tRNAs in the A and P-sites. The polypeptide is Small ribosomal subunit protein uS13 (Limosilactobacillus fermentum (strain NBRC 3956 / LMG 18251) (Lactobacillus fermentum)).